The sequence spans 406 residues: MEGMRRPTPTVYVGRVPIGGAHPIAVQSMTNTPTRDVEATTAQVLELHRAGSEIVRLTVNDEEAAKAVPEIKRRLLAEGVEVPLVGDFHFNGHLLLRKYPKMAEALDKFRINPGTLGRGRHKDEHFAEMIRIAMDLGKPVRIGANWGSLDPALLTELMDRNASRPEPKSAHEVVLEALVESAVRAYEAALEMGLGEDKLVLSAKVSKARDLVWVYRELARRTQAPLHLGLTEAGMGVKGIVASAAALAPLLLEGIGDTIRVSLTPSPKEPRTKEVEVAQEILQALGLRAFAPEVTSCPGCGRTTSTFFQELAEEVSRRLKERLPEWRARYPGVEELKVAVMGCVVNGPGESKHAHIGISLPGAGEEPKAPVYADGKLLTILKGEGIAEEFLRLVEDYVKTRFAPKA.

Residues Cys297, Cys300, Cys343, and Glu350 each contribute to the [4Fe-4S] cluster site.

The protein belongs to the IspG family. Homodimer. It depends on [4Fe-4S] cluster as a cofactor.

The enzyme catalyses (2E)-4-hydroxy-3-methylbut-2-enyl diphosphate + oxidized [flavodoxin] + H2O + 2 H(+) = 2-C-methyl-D-erythritol 2,4-cyclic diphosphate + reduced [flavodoxin]. The protein operates within isoprenoid biosynthesis; isopentenyl diphosphate biosynthesis via DXP pathway; isopentenyl diphosphate from 1-deoxy-D-xylulose 5-phosphate: step 5/6. Functionally, converts 2C-methyl-D-erythritol 2,4-cyclodiphosphate (ME-2,4cPP) into 1-hydroxy-2-methyl-2-(E)-butenyl 4-diphosphate. The chain is 4-hydroxy-3-methylbut-2-en-1-yl diphosphate synthase (flavodoxin) from Thermus thermophilus (strain ATCC BAA-163 / DSM 7039 / HB27).